The sequence spans 220 residues: ATP-dependent dethiobiotin synthetase BioD (220 aa).

ATP is bound at residue 11 to 16 (GVGKTF). Thr15 is a Mg(2+) binding site. Lys36 is a catalytic residue. Thr40 contributes to the substrate binding site. Residues Asp48 and 107 to 110 (EGAG) each bind ATP. Residues Asp48 and Glu107 each contribute to the Mg(2+) site.

This sequence belongs to the dethiobiotin synthetase family. In terms of assembly, homodimer. Mg(2+) serves as cofactor.

It localises to the cytoplasm. It catalyses the reaction (7R,8S)-7,8-diammoniononanoate + CO2 + ATP = (4R,5S)-dethiobiotin + ADP + phosphate + 3 H(+). It functions in the pathway cofactor biosynthesis; biotin biosynthesis; biotin from 7,8-diaminononanoate: step 1/2. Its function is as follows. Catalyzes a mechanistically unusual reaction, the ATP-dependent insertion of CO2 between the N7 and N8 nitrogen atoms of 7,8-diaminopelargonic acid (DAPA, also called 7,8-diammoniononanoate) to form a ureido ring. This chain is ATP-dependent dethiobiotin synthetase BioD, found in Aquifex aeolicus (strain VF5).